The primary structure comprises 304 residues: UDP-N-acetylenolpyruvoylglucosamine reductase (304 aa).

Residues 34-198 (IGGKADFLVW…LEVVFALRPG (165 aa)) enclose the FAD-binding PCMH-type domain. Arginine 177 is a catalytic residue. Catalysis depends on serine 227, which acts as the Proton donor. Residue glutamate 297 is part of the active site.

Belongs to the MurB family. It depends on FAD as a cofactor.

It localises to the cytoplasm. It catalyses the reaction UDP-N-acetyl-alpha-D-muramate + NADP(+) = UDP-N-acetyl-3-O-(1-carboxyvinyl)-alpha-D-glucosamine + NADPH + H(+). It participates in cell wall biogenesis; peptidoglycan biosynthesis. Cell wall formation. The sequence is that of UDP-N-acetylenolpyruvoylglucosamine reductase from Geobacillus kaustophilus (strain HTA426).